Consider the following 754-residue polypeptide: 5-methyltetrahydropteroyltriglutamate--homocysteine methyltransferase (754 aa).

Residues 17–20 (RELK) and Lys-117 contribute to the 5-methyltetrahydropteroyltri-L-glutamate site. L-homocysteine contacts are provided by residues 431-433 (IGS) and Glu-484. Residues 431–433 (IGS) and Glu-484 each bind L-methionine. Residues 515–516 (RC) and Trp-561 contribute to the 5-methyltetrahydropteroyltri-L-glutamate site. Residue Asp-599 participates in L-homocysteine binding. Residue Asp-599 participates in L-methionine binding. A 5-methyltetrahydropteroyltri-L-glutamate-binding site is contributed by Glu-605. Positions 641, 643, and 665 each coordinate Zn(2+). The active-site Proton donor is His-694. Cys-726 lines the Zn(2+) pocket.

The protein belongs to the vitamin-B12 independent methionine synthase family. Zn(2+) serves as cofactor.

It catalyses the reaction 5-methyltetrahydropteroyltri-L-glutamate + L-homocysteine = tetrahydropteroyltri-L-glutamate + L-methionine. It participates in amino-acid biosynthesis; L-methionine biosynthesis via de novo pathway; L-methionine from L-homocysteine (MetE route): step 1/1. Catalyzes the transfer of a methyl group from 5-methyltetrahydrofolate to homocysteine resulting in methionine formation. This Pectobacterium atrosepticum (strain SCRI 1043 / ATCC BAA-672) (Erwinia carotovora subsp. atroseptica) protein is 5-methyltetrahydropteroyltriglutamate--homocysteine methyltransferase.